The primary structure comprises 197 residues: Probable nicotinate-nucleotide adenylyltransferase (197 aa).

This sequence belongs to the NadD family.

It carries out the reaction nicotinate beta-D-ribonucleotide + ATP + H(+) = deamido-NAD(+) + diphosphate. Its pathway is cofactor biosynthesis; NAD(+) biosynthesis; deamido-NAD(+) from nicotinate D-ribonucleotide: step 1/1. Functionally, catalyzes the reversible adenylation of nicotinate mononucleotide (NaMN) to nicotinic acid adenine dinucleotide (NaAD). The polypeptide is Probable nicotinate-nucleotide adenylyltransferase (Bordetella avium (strain 197N)).